A 161-amino-acid chain; its full sequence is MKTKLITRAGYNKLKQELDYLWKEQRPEITQKVSWAASLGDRSENADYTYNKRLLRQIDRRVRFLSKLLPELKIVDYSPQQEGKVFFGAWVEIENEAGEVKKFRIVGPEEIYGDAKDYISIDSPMARALLKKQVDEEFQVHTPTGIKEWFINSIEYEKGEL.

Belongs to the GreA/GreB family. GreB subfamily.

In terms of biological role, necessary for efficient RNA polymerase transcription elongation past template-encoded arresting sites. The arresting sites in DNA have the property of trapping a certain fraction of elongating RNA polymerases that pass through, resulting in locked ternary complexes. Cleavage of the nascent transcript by cleavage factors such as GreA or GreB allows the resumption of elongation from the new 3'terminus. GreB releases sequences of up to 9 nucleotides in length. This chain is Transcription elongation factor GreB, found in Vibrio cholerae serotype O1 (strain ATCC 39315 / El Tor Inaba N16961).